We begin with the raw amino-acid sequence, 120 residues long: uncharacterized protein (120 aa).

Positions M1–N27 are cleaved as a signal peptide.

This is an uncharacterized protein from Bacillus subtilis (strain 168).